We begin with the raw amino-acid sequence, 34 residues long: Chlorotoxin-like peptide AaCtx (34 aa).

Disulfide bonds link Cys-2–Cys-19, Cys-5–Cys-27, Cys-16–Cys-32, and Cys-20–Cys-34.

The protein belongs to the short scorpion toxin superfamily. Chloride channel inhibitor family. Expressed by the venom gland.

It localises to the secreted. In terms of biological role, toxin with unknown function in healthy organisms. On glioma cells, interacts with chloride channels (probably ClC-3/CLCN3) and MMP2 at the surface of glioma cells. This complex is then internalized via caveolae, thus inhibiting the chloride channels necessary for cell shrinkage and tumor propagation. Inhibits migration and invasion of U87 glioma cells expressing CLCN3/ClC-3 voltage-gated chloride channels. This Androctonus australis (Sahara scorpion) protein is Chlorotoxin-like peptide AaCtx.